The chain runs to 84 residues: Small ribosomal subunit protein uS15 (84 aa).

Belongs to the universal ribosomal protein uS15 family. In terms of assembly, part of the 30S ribosomal subunit. Forms a bridge to the 50S subunit in the 70S ribosome, contacting the 23S rRNA.

In terms of biological role, one of the primary rRNA binding proteins, it binds directly to 16S rRNA where it helps nucleate assembly of the platform of the 30S subunit by binding and bridging several RNA helices of the 16S rRNA. Functionally, forms an intersubunit bridge (bridge B4) with the 23S rRNA of the 50S subunit in the ribosome. The sequence is that of Small ribosomal subunit protein uS15 from Akkermansia muciniphila (strain ATCC BAA-835 / DSM 22959 / JCM 33894 / BCRC 81048 / CCUG 64013 / CIP 107961 / Muc).